The following is a 224-amino-acid chain: Charged multivesicular body protein 4b (224 aa).

The disordered stretch occupies residues 1-23 (MSVFGKLFGAGGGKAGKGGPTPQ). Residue S2 is modified to N-acetylserine. At K6 the chain carries N6-acetyllysine. Residues 8 to 19 (FGAGGGKAGKGG) are compositionally biased toward gly residues. Residues 23 to 183 (QEAIQRLRDT…EELDKNLLEI (161 aa)) adopt a coiled-coil conformation. K114 is modified (N6-acetyllysine). Residues S184 and S223 each carry the phosphoserine modification. The tract at residues 185 to 224 (GPETVPLPNVPSIALPSKPAKKKEEEDDDMKELENWAGSM) is disordered.

The protein belongs to the SNF7 family. Probable core component of the endosomal sorting required for transport complex III (ESCRT-III). ESCRT-III components are thought to multimerize to form a flat lattice on the perimeter membrane of the endosome. Several assembly forms of ESCRT-III may exist that interact and act sequentially. Interacts with CHMP6 and CHMP4C. Interacts with PDCD6IP; the interaction is direct. Interacts with VPS4A; the interaction is direct. Interacts with VPS4B; the interaction is direct. Interacts with CHMP7. Interacts with CFTR; the interaction requires misfolded CFTR. Interacts with PTPN23. Interacts with CC2D1B. Post-translationally, ISGylated. Isgylation weakens its interaction with VPS4A. In terms of tissue distribution, widely expressed. Expressed at higher level in heart and skeletal muscle. Also expressed in brain, colon, thymus, spleen, kidney, liver, small intestine, placenta, lung and peripheral blood lymphocytes.

The protein localises to the cytoplasm. It localises to the cytosol. Its subcellular location is the late endosome membrane. It is found in the midbody. The protein resides in the nucleus envelope. Probable core component of the endosomal sorting required for transport complex III (ESCRT-III) which is involved in multivesicular bodies (MVBs) formation and sorting of endosomal cargo proteins into MVBs. MVBs contain intraluminal vesicles (ILVs) that are generated by invagination and scission from the limiting membrane of the endosome and mostly are delivered to lysosomes enabling degradation of membrane proteins, such as stimulated growth factor receptors, lysosomal enzymes and lipids. The MVB pathway appears to require the sequential function of ESCRT-O, -I,-II and -III complexes. ESCRT-III proteins mostly dissociate from the invaginating membrane before the ILV is released. The ESCRT machinery also functions in topologically equivalent membrane fission events, such as the terminal stages of cytokinesis. Together with SPAST, the ESCRT-III complex promotes nuclear envelope sealing and mitotic spindle disassembly during late anaphase. Plays a role in the endosomal sorting pathway. ESCRT-III proteins are believed to mediate the necessary vesicle extrusion and/or membrane fission activities, possibly in conjunction with the AAA ATPase VPS4. When overexpressed, membrane-assembled circular arrays of CHMP4B filaments can promote or stabilize negative curvature and outward budding. CHMP4A/B/C are required for the exosomal release of SDCBP, CD63 and syndecan. Majority of the protein exists in a folded closed conformation. In terms of biological role, (Microbial infection) The ESCRT machinery also functions in topologically equivalent membrane fission events, such as the budding of enveloped viruses (HIV-1 and other lentiviruses). Via its interaction with PDCD6IP involved in HIV-1 p6- and p9-dependent virus release. In Homo sapiens (Human), this protein is Charged multivesicular body protein 4b (CHMP4B).